A 625-amino-acid chain; its full sequence is Grainyhead-like protein 2 homolog (625 aa).

Disordered stretches follow at residues 1–24 (MSQE…PPFN), 82–112 (VSKA…GGEN), and 428–453 (EERK…SDGK). The interval 1 to 93 (MSQESDNNKR…KASDSQEDQE (93 aa)) is transcription activation. 2 stretches are compositionally biased toward polar residues: residues 98–109 (LGTSEAQSNLSG) and 440–451 (QASQTQCNSSSD). The 239-residue stretch at 244-482 (SSGTFQYTLE…DLHSQPVLFI (239 aa)) folds into the Grh/CP2 DB domain.

Belongs to the grh/CP2 family. Grainyhead subfamily. In terms of assembly, homodimer, also forms heterodimers with GRHL1 or GRHL3. In terms of tissue distribution, expressed in keratinocytes (at protein level). Highly expressed in placenta, prostate, brain and kidney. Lower-level expression in a variety of epithelial tissues such as thymus, lung, salivary gland, mammary gland and digestive tract. Expressed in the cochlear. Expressed in corneal epithelial cells, but not in the endothelium or stroma.

It localises to the nucleus. The protein resides in the membrane. In terms of biological role, transcription factor playing an important role in primary neurulation and in epithelial development. Binds directly to the consensus DNA sequence 5'-AACCGGTT-3' acting as an activator and repressor on distinct target genes. During embryogenesis, plays unique and cooperative roles with GRHL3 in establishing distinct zones of primary neurulation. Essential for closure 3 (rostral end of the forebrain), functions cooperatively with GRHL3 in closure 2 (forebrain/midbrain boundary) and posterior neuropore closure. Regulates epithelial morphogenesis acting as a target gene-associated transcriptional activator of apical junctional complex components. Up-regulates of CLDN3 and CLDN4, as well as of RAB25, which increases the CLDN4 protein and its localization at tight junctions. Comprises an essential component of the transcriptional machinery that establishes appropriate expression levels of CLDN4 and CDH1 in different types of epithelia. Exhibits functional redundancy with GRHL3 in epidermal morphogenetic events and epidermal wound repair. In lung, forms a regulatory loop with NKX2-1 that coordinates lung epithelial cell morphogenesis and differentiation. In keratinocytes, plays a role in telomerase activation during cellular proliferation, regulates TERT expression by binding to TERT promoter region and inhibiting DNA methylation at the 5'-CpG island, possibly by interfering with DNMT1 enzyme activity. In addition, impairs keratinocyte differentiation and epidermal function by inhibiting the expression of genes clustered at the epidermal differentiation complex (EDC) as well as GRHL1 and GRHL3 through epigenetic mechanisms. In Homo sapiens (Human), this protein is Grainyhead-like protein 2 homolog (GRHL2).